We begin with the raw amino-acid sequence, 258 residues long: Isoprenyl transferase (258 aa).

The active site involves aspartate 24. Aspartate 24 is a binding site for Mg(2+). Substrate-binding positions include 25–28, tryptophan 29, arginine 37, histidine 41, and 69–71; these read GNGR and SSE. Asparagine 72 serves as the catalytic Proton acceptor. Substrate-binding positions include tryptophan 73, arginine 75, arginine 190, and 196-198; that span reads RIS. Glutamate 209 lines the Mg(2+) pocket.

This sequence belongs to the UPP synthase family. In terms of assembly, homodimer. The cofactor is Mg(2+).

Its function is as follows. Catalyzes the condensation of isopentenyl diphosphate (IPP) with allylic pyrophosphates generating different type of terpenoids. The protein is Isoprenyl transferase of Ralstonia nicotianae (strain ATCC BAA-1114 / GMI1000) (Ralstonia solanacearum).